The sequence spans 445 residues: Argininosuccinate synthase (445 aa).

Residues 17 to 25 and alanine 43 each bind ATP; that span reads AFSGGLDTS. Tyrosine 99 is an L-citrulline binding site. ATP-binding residues include glycine 129 and threonine 131. L-aspartate-binding residues include threonine 131, asparagine 135, and aspartate 136. Asparagine 135 provides a ligand contact to L-citrulline. Aspartate 136 lines the ATP pocket. L-citrulline-binding residues include arginine 139 and serine 192. Aspartate 194 serves as a coordination point for ATP. L-citrulline-binding residues include threonine 201, glutamate 203, and glutamate 280.

This sequence belongs to the argininosuccinate synthase family. Type 2 subfamily. In terms of assembly, homotetramer.

Its subcellular location is the cytoplasm. It catalyses the reaction L-citrulline + L-aspartate + ATP = 2-(N(omega)-L-arginino)succinate + AMP + diphosphate + H(+). It participates in amino-acid biosynthesis; L-arginine biosynthesis; L-arginine from L-ornithine and carbamoyl phosphate: step 2/3. The polypeptide is Argininosuccinate synthase (Polaromonas naphthalenivorans (strain CJ2)).